The following is a 96-amino-acid chain: Co-chaperonin GroES (96 aa).

This sequence belongs to the GroES chaperonin family. Heptamer of 7 subunits arranged in a ring. Interacts with the chaperonin GroEL.

The protein resides in the cytoplasm. Its function is as follows. Together with the chaperonin GroEL, plays an essential role in assisting protein folding. The GroEL-GroES system forms a nano-cage that allows encapsulation of the non-native substrate proteins and provides a physical environment optimized to promote and accelerate protein folding. GroES binds to the apical surface of the GroEL ring, thereby capping the opening of the GroEL channel. In Histophilus somni (strain 129Pt) (Haemophilus somnus), this protein is Co-chaperonin GroES.